Reading from the N-terminus, the 201-residue chain is Large ribosomal subunit protein uL4 (201 aa).

Positions 43–69 are disordered; that stretch reads TKAQKTRSEVAGGGKKPWRQKGTGRAR.

It belongs to the universal ribosomal protein uL4 family. In terms of assembly, part of the 50S ribosomal subunit.

Its function is as follows. One of the primary rRNA binding proteins, this protein initially binds near the 5'-end of the 23S rRNA. It is important during the early stages of 50S assembly. It makes multiple contacts with different domains of the 23S rRNA in the assembled 50S subunit and ribosome. Forms part of the polypeptide exit tunnel. The chain is Large ribosomal subunit protein uL4 from Idiomarina loihiensis (strain ATCC BAA-735 / DSM 15497 / L2-TR).